The chain runs to 101 residues: Small ribosomal subunit protein uS14 (101 aa).

Residues 1-10 (MAKKSAIEKN) show a composition bias toward basic and acidic residues. The interval 1–23 (MAKKSAIEKNNRRKKMTKNAAPK) is disordered. Basic residues predominate over residues 11-23 (NRRKKMTKNAAPK).

As to quaternary structure, part of the 30S ribosomal subunit. Contacts proteins S3 and S10.

Binds 16S rRNA, required for the assembly of 30S particles and may also be responsible for determining the conformation of the 16S rRNA at the A site. This chain is Small ribosomal subunit protein uS14, found in Rhodopseudomonas palustris (strain ATCC BAA-98 / CGA009).